Here is a 73-residue protein sequence, read N- to C-terminus: MKYIILFLVLIGLQANLALGSKCKCDCTKYPYSPVCAKELKTGDTETFNNVCQLQCYNCTHMKNYVVIYSGSC.

Positions 1–20 are cleaved as a signal peptide; sequence MKYIILFLVLIGLQANLALG. A Kazal-like domain is found at 21–73; the sequence is SKCKCDCTKYPYSPVCAKELKTGDTETFNNVCQLQCYNCTHMKNYVVIYSGSC. 3 cysteine pairs are disulfide-bonded: C23–C59, C27–C52, and C36–C73.

In terms of tissue distribution, expressed by the venom gland (anterior main gland) (at protein level).

It localises to the secreted. Its function is as follows. May act as a serine protease inhibitor, since it possess the kazal serine protease inhibitor signature. The chain is Kazal peptide Pr13a from Platymeris rhadamanthus (Red spot assassin bug).